The chain runs to 129 residues: Small ribosomal subunit protein uS8 (129 aa).

It belongs to the universal ribosomal protein uS8 family. As to quaternary structure, part of the 30S ribosomal subunit. Contacts proteins S5 and S12.

Functionally, one of the primary rRNA binding proteins, it binds directly to 16S rRNA central domain where it helps coordinate assembly of the platform of the 30S subunit. This is Small ribosomal subunit protein uS8 from Spiroplasma kunkelii.